Here is a 147-residue protein sequence, read N- to C-terminus: 3-dehydroquinate dehydratase (147 aa).

Y23 acts as the Proton acceptor in catalysis. Residues N75, H81, and D88 each contribute to the substrate site. H101 serves as the catalytic Proton donor. Residues 102-103 and R112 each bind substrate; that span reads LS.

Belongs to the type-II 3-dehydroquinase family. Homododecamer.

It carries out the reaction 3-dehydroquinate = 3-dehydroshikimate + H2O. Its pathway is metabolic intermediate biosynthesis; chorismate biosynthesis; chorismate from D-erythrose 4-phosphate and phosphoenolpyruvate: step 3/7. Catalyzes a trans-dehydration via an enolate intermediate. The sequence is that of 3-dehydroquinate dehydratase from Stutzerimonas stutzeri (strain A1501) (Pseudomonas stutzeri).